Reading from the N-terminus, the 1132-residue chain is NUT family member 1 (1132 aa).

Disordered regions lie at residues 1 to 56, 337 to 365, 383 to 405, 476 to 584, 693 to 714, 873 to 892, and 922 to 1017; these read MASD…SVFS, AASK…EIPP, LATG…EGMY, EEED…VERR, RGTP…GERD, DASS…NSFS, and PLNV…DEEL. Positions 21–36 are enriched in pro residues; sequence APSPSPALPFLPPTSD. Residues 337 to 352 show a composition bias toward basic residues; that stretch reads AASKTRAPRRRQRKAQ. Positions 395 to 404 are enriched in acidic residues; it reads EGQQQEEEGM. Composition is skewed to polar residues over residues 487-497, 697-706, and 883-892; these read SGAQLDSSPSG, MAQSYDQNPS, and EAGSRGNSFS. Positions 932–942 are enriched in basic and acidic residues; sequence GEGRVDPDLSK. The segment covering 950 to 971 has biased composition (polar residues); it reads QESQESYTTGTPKATSSHQGLG. Serine 1026, serine 1029, and serine 1031 each carry phosphoserine. Residues 1031–1132 form a disordered region; it reads SPREHPLSPH…GRRKKRRRSQ (102 aa). Glutamine 1046 is subject to N5-methylglutamine. Positions 1123–1132 are enriched in basic residues; that stretch reads GRRKKRRRSQ.

Belongs to the NUT family. Methylated at Gln-1046 by N6AMT1. In terms of processing, phosphorylation on Ser-1026, Ser-1029 or Ser-1031 is important for cytoplasmic export. In terms of tissue distribution, specifically expressed in testis.

The protein localises to the cytoplasm. The protein resides in the nucleus. Plays a role in the regulation of proliferation. Regulates TERT expression by modulating SP1 binding to TERT promoter binding sites. This Homo sapiens (Human) protein is NUT family member 1.